Reading from the N-terminus, the 496-residue chain is Genome polyprotein (496 aa).

The Extracellular portion of the chain corresponds to 1–447 (SRCTHLENRD…HTVLGGAFNS (447 aa)). Cystine bridges form between C3/C30, C60/C116, C60/C121, C74/C105, C92/C116, and C92/C121. The interval 98–111 (DRGWGNHCGLFGKG) is fusion peptide. N-linked (GlcNAc...) asparagine; by host glycosylation is present at N154. 2 disulfides stabilise this stretch: C186–C290 and C307–C338. Residues 448–468 (IFGGVGFLPKLLMGVALAWLG) traverse the membrane as a helical segment. Residues 469 to 479 (LNTRNPTMSMS) are Cytoplasmic-facing. Residues 480 to 496 (FLLAGGLVLAMTLGVGA) form a helical membrane-spanning segment.

As to quaternary structure, homodimer; in the endoplasmic reticulum and Golgi. N-glycosylated.

It is found in the virion membrane. The protein resides in the host endoplasmic reticulum membrane. In terms of biological role, binds to host cell surface receptor and mediates fusion between viral and cellular membranes. Envelope protein is synthesized in the endoplasmic reticulum in the form of heterodimer with protein prM. They play a role in virion budding in the ER, and the newly formed immature particle is covered with 60 spikes composed of heterodimer between precursor prM and envelope protein E. The virion is transported to the Golgi apparatus where the low pH causes dissociation of PrM-E heterodimers and formation of E homodimers. prM-E cleavage is ineficient, and many virions are only partially matured. These uncleaved prM would play a role in immune evasion. The sequence is that of Genome polyprotein from Bos taurus (Bovine).